Consider the following 168-residue polypeptide: DNA-binding protein inhibitor ID-1 (168 aa).

A bHLH domain is found at 46–98 (LPALLDEQQVNVLLYDMNGCYSRLKELVPTLPQNRKVSKVEILQHVIDYIRDL). The interaction with IFI204 stretch occupies residues 53–106 (QQVNVLLYDMNGCYSRLKELVPTLPQNRKVSKVEILQHVIDYIRDLQLELNSES). The Nuclear export signal signature appears at 91–104 (VIDYIRDLQLELNS).

In terms of assembly, heterodimer with other HLH proteins. Interacts with CLOCK and BMAL1. Interacts with COPS5, IFI204, GATA4 and NKX2-5. Post-translationally, polyubiquitinated; which is favored by Ifi204 and leads to proteasomal degradation.

The protein resides in the cytoplasm. It localises to the nucleus. Its function is as follows. Transcriptional regulator (lacking a basic DNA binding domain) which negatively regulates the basic helix-loop-helix (bHLH) transcription factors by forming heterodimers and inhibiting their DNA binding and transcriptional activity. Implicated in regulating a variety of cellular processes, including cellular growth, senescence, differentiation, apoptosis, angiogenesis, and neoplastic transformation. Inhibits skeletal muscle and cardiac myocyte differentiation. Regulates the circadian clock by repressing the transcriptional activator activity of the CLOCK-BMAL1 heterodimer. The polypeptide is DNA-binding protein inhibitor ID-1 (Id1) (Mus musculus (Mouse)).